A 506-amino-acid polypeptide reads, in one-letter code: Galactose/methyl galactoside import ATP-binding protein MglA (506 aa).

ABC transporter domains lie at 14–249 (LTMT…VGRE) and 260–506 (TPKE…AKYL). An ATP-binding site is contributed by 46–53 (GENGAGKS).

It belongs to the ABC transporter superfamily. Galactose/methyl galactoside importer (TC 3.A.1.2.3) family. In terms of assembly, the complex is composed of one ATP-binding protein (MglA), two transmembrane proteins (MglC) and a solute-binding protein (MglB).

It localises to the cell inner membrane. It catalyses the reaction D-galactose(out) + ATP + H2O = D-galactose(in) + ADP + phosphate + H(+). The enzyme catalyses methyl beta-D-galactoside(out) + ATP + H2O = methyl beta-D-galactoside(in) + ADP + phosphate + H(+). Functionally, part of the ABC transporter complex MglABC involved in galactose/methyl galactoside import. Responsible for energy coupling to the transport system. This chain is Galactose/methyl galactoside import ATP-binding protein MglA, found in Pasteurella multocida (strain Pm70).